Reading from the N-terminus, the 243-residue chain is Protein unc-119 homolog B (243 aa).

Residues 1–21 are compositionally biased toward polar residues; it reads MNSQSSRNETAATAVNGSDSA. The tract at residues 1-49 is disordered; it reads MNSQSSRNETAATAVNGSDSAAASRDHKSGGGVLKRLKSRRNQVDRRPV. Tyr134 serves as a coordination point for tetradecanoate.

The protein belongs to the PDE6D/unc-119 family. In terms of tissue distribution, detected in embryo. Detected in larvae four days after fertilization, in retina and neural tissues (at protein level). Detected in embryos at the sphere stage, during gastrulation, somitogenesis and in swimming larvae, both within and outside of the developing nervous system. Detected in adults.

Its subcellular location is the cell projection. The protein localises to the cilium. In terms of biological role, myristoyl-binding protein that acts as a cargo adapter: specifically binds the myristoyl moiety of a subset of N-terminally myristoylated proteins and is required for their localization. Plays a key role in localization of proteins to the primary cilium membrane. This chain is Protein unc-119 homolog B (unc119b), found in Danio rerio (Zebrafish).